Here is a 431-residue protein sequence, read N- to C-terminus: 3-deoxy-D-manno-octulosonic acid transferase (431 aa).

Residues tryptophan 5–phenylalanine 27 form a helical; Signal-anchor membrane-spanning segment. Residue glutamate 67 is the Proton acceptor of the active site. CMP-binding positions include proline 275 to arginine 276, methionine 315 to valine 317, and asparagine 342 to glutamate 345.

Belongs to the glycosyltransferase group 1 family. Glycosyltransferase 30 subfamily.

It localises to the cell inner membrane. It carries out the reaction lipid IVA (E. coli) + CMP-3-deoxy-beta-D-manno-octulosonate = alpha-Kdo-(2-&gt;6)-lipid IVA (E. coli) + CMP + H(+). It catalyses the reaction alpha-Kdo-(2-&gt;6)-lipid IVA (E. coli) + CMP-3-deoxy-beta-D-manno-octulosonate = alpha-Kdo-(2-&gt;4)-alpha-Kdo-(2-&gt;6)-lipid IVA (E. coli) + CMP + H(+). The enzyme catalyses alpha-Kdo-(2-&gt;4)-alpha-Kdo-(2-&gt;6)-lipid IVA (E. coli) + CMP-3-deoxy-beta-D-manno-octulosonate = alpha-Kdo-(2-&gt;8)-alpha-Kdo-(2-&gt;4)-alpha-Kdo-(2-&gt;6)-lipid IVA (E. coli) + CMP + H(+). The protein operates within bacterial outer membrane biogenesis; LPS core biosynthesis. In terms of biological role, involved in lipopolysaccharide (LPS) biosynthesis. Catalyzes the transfer of three 3-deoxy-D-manno-octulosonate (Kdo) residues from CMP-Kdo to lipid IV(A), the tetraacyldisaccharide-1,4'-bisphosphate precursor of lipid A. Thus generates the genus-specific LPS epitope of Chlamydia, composed of the trisaccharide alpha-Kdo-(2-&gt;8)-alpha-Kdo-(2-&gt;4)-alpha-Kdo. This chain is 3-deoxy-D-manno-octulosonic acid transferase (waaA), found in Chlamydia trachomatis serovar A (strain ATCC VR-571B / DSM 19440 / HAR-13).